An 863-amino-acid chain; its full sequence is Protein translocase subunit SecA (863 aa).

ATP contacts are provided by residues Gln88, 106-110 (GEGKT), and Asp507. The interval 806 to 863 (KSHEQNEQFLSNTTESGVNENGEAQITKVPRNSPCPCGSGKKYKECHGKSGPKKGILA) is disordered. Polar residues predominate over residues 812–829 (EQFLSNTTESGVNENGEA). 4 residues coordinate Zn(2+): Cys840, Cys842, Cys851, and His852.

This sequence belongs to the SecA family. In terms of assembly, monomer and homodimer. Part of the essential Sec protein translocation apparatus which comprises SecA, SecYEG and auxiliary proteins SecDF-YajC and YidC. Requires Zn(2+) as cofactor.

It localises to the cell inner membrane. The protein resides in the cytoplasm. The catalysed reaction is ATP + H2O + cellular proteinSide 1 = ADP + phosphate + cellular proteinSide 2.. Part of the Sec protein translocase complex. Interacts with the SecYEG preprotein conducting channel. Has a central role in coupling the hydrolysis of ATP to the transfer of proteins into and across the cell membrane, serving as an ATP-driven molecular motor driving the stepwise translocation of polypeptide chains across the membrane. This Campylobacter lari (strain RM2100 / D67 / ATCC BAA-1060) protein is Protein translocase subunit SecA.